A 198-amino-acid chain; its full sequence is Recombination protein RecR (198 aa).

The C4-type zinc finger occupies 57-72 (CSVCGHITDRDPCYIC). A Toprim domain is found at 80 to 175 (SVVCVVQEPK…KVTRIAHGLP (96 aa)).

This sequence belongs to the RecR family.

May play a role in DNA repair. It seems to be involved in an RecBC-independent recombinational process of DNA repair. It may act with RecF and RecO. The chain is Recombination protein RecR from Bacillus thuringiensis (strain Al Hakam).